The primary structure comprises 174 residues: UPF0398 protein LACR_0544 (174 aa).

Belongs to the UPF0398 family.

The polypeptide is UPF0398 protein LACR_0544 (Lactococcus lactis subsp. cremoris (strain SK11)).